Here is a 355-residue protein sequence, read N- to C-terminus: uncharacterized protein (355 aa).

The signal sequence occupies residues methionine 1–glycine 21. 6 N-linked (GlcNAc...) asparagine; by host glycosylation sites follow: asparagine 20, asparagine 78, asparagine 87, asparagine 156, asparagine 159, and asparagine 274. The Virion surface segment spans residues serine 22–glycine 331. A disordered region spans residues glycine 288 to proline 317. A compositionally biased stretch (pro residues) spans proline 296–proline 317. A glycan (N-linked (GlcNAc...) asparagine; by host) is linked at asparagine 320. Residues leucine 332 to phenylalanine 352 form a helical membrane-spanning segment. Residues tyrosine 353–arginine 355 are Intravirion-facing.

It localises to the host membrane. The protein resides in the virion. This is an uncharacterized protein from Acanthamoeba polyphaga mimivirus (APMV).